Here is a 565-residue protein sequence, read N- to C-terminus: Proline--tRNA ligase (565 aa).

Belongs to the class-II aminoacyl-tRNA synthetase family. ProS type 1 subfamily. Homodimer.

It is found in the cytoplasm. It carries out the reaction tRNA(Pro) + L-proline + ATP = L-prolyl-tRNA(Pro) + AMP + diphosphate. In terms of biological role, catalyzes the attachment of proline to tRNA(Pro) in a two-step reaction: proline is first activated by ATP to form Pro-AMP and then transferred to the acceptor end of tRNA(Pro). As ProRS can inadvertently accommodate and process non-cognate amino acids such as alanine and cysteine, to avoid such errors it has two additional distinct editing activities against alanine. One activity is designated as 'pretransfer' editing and involves the tRNA(Pro)-independent hydrolysis of activated Ala-AMP. The other activity is designated 'posttransfer' editing and involves deacylation of mischarged Ala-tRNA(Pro). The misacylated Cys-tRNA(Pro) is not edited by ProRS. This is Proline--tRNA ligase from Lactobacillus acidophilus (strain ATCC 700396 / NCK56 / N2 / NCFM).